The primary structure comprises 40 residues: Large ribosomal subunit protein bL36A (40 aa).

It belongs to the bacterial ribosomal protein bL36 family.

The polypeptide is Large ribosomal subunit protein bL36A (Kineococcus radiotolerans (strain ATCC BAA-149 / DSM 14245 / SRS30216)).